The primary structure comprises 374 residues: Isocitrate dehydrogenase [NAD] catalytic subunit 5, mitochondrial (374 aa).

The transit peptide at 1-44 directs the protein to the mitochondrion; sequence MTMAANLARRLIGNRSTQILGAVNSSSGAASSVARAFCSSTTPI. Arginine 127, arginine 137, arginine 158, and aspartate 245 together coordinate substrate. Residues aspartate 245, aspartate 269, and aspartate 273 each contribute to the Mg(2+) site.

This sequence belongs to the isocitrate and isopropylmalate dehydrogenases family. In terms of assembly, heterooligomer of catalytic and regulatory subunits. It depends on Mg(2+) as a cofactor. Requires Mn(2+) as cofactor. In terms of tissue distribution, ubiquitous.

Its subcellular location is the mitochondrion. It catalyses the reaction D-threo-isocitrate + NAD(+) = 2-oxoglutarate + CO2 + NADH. Performs an essential role in the oxidative function of the citric acid cycle. The chain is Isocitrate dehydrogenase [NAD] catalytic subunit 5, mitochondrial (IDH5) from Arabidopsis thaliana (Mouse-ear cress).